The sequence spans 1578 residues: FERM and PDZ domain-containing protein 1 (1578 aa).

One can recognise a PDZ domain in the interval 57–135; the sequence is TVKIDKDTLL…SLSITVVRCT (79 aa). Residues 181–496 enclose the FERM domain; it reads NVLKLYLENG…GYYRLLVDPV (316 aa). Disordered regions lie at residues 555 to 616, 720 to 743, and 759 to 831; these read KEEQ…EEDD, SDSS…QGWT, and PLAF…VKKY. Residues 720–729 show a composition bias toward polar residues; the sequence is SDSSESTASR. Over residues 730 to 742 the composition is skewed to low complexity; it reads QGGAPPAWGQQGW. The segment covering 793–811 has biased composition (polar residues); the sequence is AEPSATSLQNKASTSSPEN. A compositionally biased stretch (basic residues) spans 822–831; that stretch reads PSRRGGVKKY. The important for interaction with GPSM2 stretch occupies residues 924–931; sequence EPETMETK. Disordered regions lie at residues 950–1030, 1070–1194, and 1347–1374; these read PNNK…LASN, KYTE…QGCQ, and PQPE…SAGS. The span at 968–986 shows a compositional bias: polar residues; the sequence is TPHCSNPGSSGPDTAQARP. Over residues 1100-1117 the composition is skewed to basic and acidic residues; it reads TKEEPQGQLSLERDREVT. The segment covering 1139–1150 has biased composition (polar residues); that stretch reads DVSNNVSQTLDI.

In terms of assembly, interacts with GPSM1. Interacts with GPSM2 (via TPR repeat region).

The protein localises to the cytoplasm. Its subcellular location is the cytosol. The protein resides in the cell membrane. Functionally, stabilizes membrane-bound GPSM1, and thereby promotes its interaction with GNAI1. The sequence is that of FERM and PDZ domain-containing protein 1 (FRMPD1) from Homo sapiens (Human).